The following is a 318-amino-acid chain: NADH-ubiquinone oxidoreductase chain 1 (318 aa).

8 helical membrane-spanning segments follow: residues 2-22 (FLIN…FLTL), 69-89 (FLFT…WAPL), 102-122 (LLFI…SGWA), 146-166 (MTTI…TAFA), 171-191 (HLWL…STLA), 222-242 (LFFM…VILF), 253-273 (EIST…FLWV), and 294-314 (LPLT…LACI).

It belongs to the complex I subunit 1 family. Core subunit of respiratory chain NADH dehydrogenase (Complex I) which is composed of 45 different subunits.

It is found in the mitochondrion inner membrane. It catalyses the reaction a ubiquinone + NADH + 5 H(+)(in) = a ubiquinol + NAD(+) + 4 H(+)(out). Functionally, core subunit of the mitochondrial membrane respiratory chain NADH dehydrogenase (Complex I) which catalyzes electron transfer from NADH through the respiratory chain, using ubiquinone as an electron acceptor. Essential for the catalytic activity and assembly of complex I. The chain is NADH-ubiquinone oxidoreductase chain 1 (MT-ND1) from Elephas maximus (Indian elephant).